Consider the following 340-residue polypeptide: Fructose-1,6-bisphosphatase class 1 (340 aa).

Residues Glu-107, Asp-126, Leu-128, and Asp-129 each coordinate Mg(2+). Asn-215 contributes to the substrate binding site. Glu-287 serves as a coordination point for Mg(2+).

It belongs to the FBPase class 1 family. As to quaternary structure, homotetramer. Mg(2+) serves as cofactor.

It localises to the cytoplasm. It catalyses the reaction beta-D-fructose 1,6-bisphosphate + H2O = beta-D-fructose 6-phosphate + phosphate. Its pathway is carbohydrate biosynthesis; gluconeogenesis. The protein is Fructose-1,6-bisphosphatase class 1 of Brucella canis (strain ATCC 23365 / NCTC 10854 / RM-666).